Reading from the N-terminus, the 337-residue chain is Phenylalanine--tRNA ligase alpha subunit (337 aa).

Glu252 serves as a coordination point for Mg(2+).

This sequence belongs to the class-II aminoacyl-tRNA synthetase family. Phe-tRNA synthetase alpha subunit type 1 subfamily. Tetramer of two alpha and two beta subunits. It depends on Mg(2+) as a cofactor.

The protein localises to the cytoplasm. It carries out the reaction tRNA(Phe) + L-phenylalanine + ATP = L-phenylalanyl-tRNA(Phe) + AMP + diphosphate + H(+). This is Phenylalanine--tRNA ligase alpha subunit from Cellvibrio japonicus (strain Ueda107) (Pseudomonas fluorescens subsp. cellulosa).